The chain runs to 142 residues: Large ribosomal subunit protein bL17 (142 aa).

It belongs to the bacterial ribosomal protein bL17 family. Part of the 50S ribosomal subunit. Contacts protein L32.

This is Large ribosomal subunit protein bL17 from Chlamydia muridarum (strain MoPn / Nigg).